Reading from the N-terminus, the 303-residue chain is tRNA pseudouridine synthase B (303 aa).

Residue Asp-47 is the Nucleophile of the active site.

This sequence belongs to the pseudouridine synthase TruB family. Type 1 subfamily.

It carries out the reaction uridine(55) in tRNA = pseudouridine(55) in tRNA. Its function is as follows. Responsible for synthesis of pseudouridine from uracil-55 in the psi GC loop of transfer RNAs. This chain is tRNA pseudouridine synthase B, found in Legionella pneumophila subsp. pneumophila (strain Philadelphia 1 / ATCC 33152 / DSM 7513).